A 43-amino-acid polypeptide reads, in one-letter code: Protein PsbN (43 aa).

The chain crosses the membrane as a helical span at residues 7–29; sequence VAIFLSGLLVSFTGYALYTAFGQ.

Belongs to the PsbN family.

It is found in the plastid. The protein resides in the chloroplast thylakoid membrane. Functionally, may play a role in photosystem I and II biogenesis. In Draba nemorosa (Woodland whitlowgrass), this protein is Protein PsbN.